Here is a 194-residue protein sequence, read N- to C-terminus: uncharacterized protein (194 aa).

The region spanning Glu-6 to Lys-66 is the HTH tetR-type domain. The H-T-H motif DNA-binding region spans Ser-29–Tyr-48.

This is an uncharacterized protein from Bacillus subtilis (strain 168).